The primary structure comprises 157 residues: Transcription elongation factor GreA (157 aa).

This sequence belongs to the GreA/GreB family.

Functionally, necessary for efficient RNA polymerase transcription elongation past template-encoded arresting sites. The arresting sites in DNA have the property of trapping a certain fraction of elongating RNA polymerases that pass through, resulting in locked ternary complexes. Cleavage of the nascent transcript by cleavage factors such as GreA or GreB allows the resumption of elongation from the new 3'terminus. GreA releases sequences of 2 to 3 nucleotides. The chain is Transcription elongation factor GreA from Caulobacter vibrioides (strain ATCC 19089 / CIP 103742 / CB 15) (Caulobacter crescentus).